The primary structure comprises 319 residues: Acetaldehyde dehydrogenase 1 (319 aa).

Residue Cys-129 is the Acyl-thioester intermediate of the active site. NAD(+) contacts are provided by residues 160-168 (SAGPGTRAN) and Asn-287.

This sequence belongs to the acetaldehyde dehydrogenase family.

The enzyme catalyses acetaldehyde + NAD(+) + CoA = acetyl-CoA + NADH + H(+). This chain is Acetaldehyde dehydrogenase 1, found in Burkholderia lata (strain ATCC 17760 / DSM 23089 / LMG 22485 / NCIMB 9086 / R18194 / 383).